We begin with the raw amino-acid sequence, 180 residues long: Bifunctional protein PyrR (180 aa).

The PRPP-binding motif lies at 99–111 (VILVDDVLYTCRT).

This sequence belongs to the purine/pyrimidine phosphoribosyltransferase family. PyrR subfamily. In terms of assembly, homodimer and homohexamer; in equilibrium.

The enzyme catalyses UMP + diphosphate = 5-phospho-alpha-D-ribose 1-diphosphate + uracil. In terms of biological role, regulates transcriptional attenuation of the pyrimidine nucleotide (pyr) operon by binding in a uridine-dependent manner to specific sites on pyr mRNA. This disrupts an antiterminator hairpin in the RNA and favors formation of a downstream transcription terminator, leading to a reduced expression of downstream genes. Functionally, also displays a weak uracil phosphoribosyltransferase activity which is not physiologically significant. This is Bifunctional protein PyrR from Clostridium botulinum (strain Alaska E43 / Type E3).